The primary structure comprises 634 residues: Sodium-dependent neutral amino acid transporter B(0)AT1 (634 aa).

Residues 1 to 41 (MVRLVLPNPGLEERIPSLDELEVIEKEEAGSRPKWDNKAQY) are Cytoplasmic-facing. Residue Ser-17 is modified to Phosphoserine. Residues 42–62 (MLTCVGFCVGLGNVWRFPYLC) form a helical membrane-spanning segment. Over 63–67 (QSHGG) the chain is Extracellular. Residues 68–88 (GAFMIPFLILLVFEGIPLLYL) traverse the membrane as a helical segment. Topologically, residues 89–119 (EFAIGQRLRKGSMGVWSSIHPALKGIGIASM) are cytoplasmic. Residues 120–140 (FVSFMVGLYYNTIIAWVMWYF) form a helical membrane-spanning segment. The Extracellular segment spans residues 141-192 (FNSFQEPLPWSECPLNQNQTGYVEECAKSSSVDYFWYRETLNISTSISDSGS). N-linked (GlcNAc...) asparagine glycosylation is found at Asn-158 and Asn-182. Residues 193-213 (IQWWILLCLTCAWSVLYVCII) form a helical membrane-spanning segment. Residues 214–221 (RGIETTGK) are Cytoplasmic-facing. A helical transmembrane segment spans residues 222-242 (AVYITSTLPYVVLTIFLIRGL). Residues 243-268 (TLKGATNGIVFLFTPNITELSNPNTW) are Extracellular-facing. Residue Asn-258 is glycosylated (N-linked (GlcNAc...) asparagine). Residues 269 to 289 (LDAGAQVFYSFSLAFGGLISF) form a helical membrane-spanning segment. Over 290-304 (SSYNSVHNNCEMDSV) the chain is Cytoplasmic. Residues 305–325 (IVSVINGFTSVYAATVVYSII) form a helical membrane-spanning segment. At 326–413 (GFRATERFDD…TEAITKMPVS (88 aa)) the chain is on the extracellular side. 2 N-linked (GlcNAc...) asparagine glycosylation sites follow: Asn-354 and Asn-368. A helical transmembrane segment spans residues 414-434 (PLWSVLFFIMLFCLGLSSMFG). Residues 435–456 (NMEGVVVPLQDLNITPKKWPKE) lie on the Cytoplasmic side of the membrane. The helical transmembrane segment at 457–477 (LLTGLICLGTYLIAFIFTLNS) threads the bilayer. Residues 478–487 (GQYWLSLLDS) lie on the Extracellular side of the membrane. Residues 488–508 (FAGSIPLLIIAFCEMFAVVYV) traverse the membrane as a helical segment. At 509–531 (YGVDRFNKDIEFMIGHKPNIFWQ) the chain is on the cytoplasmic side. The helical transmembrane segment at 532–552 (VTWRVVSPLIMLVIFLFFFVI) threads the bilayer. The Extracellular segment spans residues 553–581 (EVNKTLMYSIWDPNYEEFPKSQKIPYPNW). N-linked (GlcNAc...) asparagine glycosylation occurs at Asn-555. A helical membrane pass occupies residues 582 to 602 (VYAVVVTVAGVPCLSIPCFAI). At 603-634 (YKFIRNCCQKSDDHHGLVNTLSTASVNGDLKN) the chain is on the cytoplasmic side. At Ser-627 the chain carries Phosphoserine.

Belongs to the sodium:neurotransmitter symporter (SNF) (TC 2.A.22) family. SLC6A19 subfamily. As to quaternary structure, interacts in a tissue-specific manner with ACE2 in small intestine and with CLTRN in the kidney. Interacts with CLTRN; this interaction is required for trafficking of SLC6A19 to the plasma membrane and for its catalytic activation in kidneys. Interacts with ACE2; this interaction is required for trafficking of SLC6A19 to the plasma membrane and for its catalytic activation in intestine. Interacts with ANPEP; the interaction positively regulates its amino acid transporter activity. As to expression, predominantly expressed in kidney and small intestine (at protein level). Expressed in the intestinal brush border (at protein level). Expression not observed in other organs, such as lung, skeletal muscle, brain, liver and pancreas. In kidney, expression is localized in the renal cortex but not in the medulla. Substantial amounts of expression in the proximal tubules. The distal nephron segments and the glomeruli are consistently negative. In the small intestine, expression is exclusively localized in villus enterocytes. High resolution of the hybridization-positive villi reveals a gradient of expression with the highest levels in apical cells. Not detected in crypt cells or in any other cell types of the small intestine.

The protein localises to the cell membrane. The catalysed reaction is L-alanine(in) + Na(+)(in) = L-alanine(out) + Na(+)(out). It catalyses the reaction L-cysteine(in) + Na(+)(in) = L-cysteine(out) + Na(+)(out). The enzyme catalyses L-glutamine(in) + Na(+)(in) = L-glutamine(out) + Na(+)(out). It carries out the reaction glycine(in) + Na(+)(in) = glycine(out) + Na(+)(out). The catalysed reaction is L-isoleucine(in) + Na(+)(in) = L-isoleucine(out) + Na(+)(out). It catalyses the reaction L-leucine(in) + Na(+)(in) = L-leucine(out) + Na(+)(out). The enzyme catalyses L-methionine(in) + Na(+)(in) = L-methionine(out) + Na(+)(out). It carries out the reaction L-phenylalanine(in) + Na(+)(in) = L-phenylalanine(out) + Na(+)(out). The catalysed reaction is L-serine(in) + Na(+)(in) = L-serine(out) + Na(+)(out). It catalyses the reaction L-tryptophan(in) + Na(+)(in) = L-tryptophan(out) + Na(+)(out). The enzyme catalyses L-tyrosine(in) + Na(+)(in) = L-tyrosine(out) + Na(+)(out). It carries out the reaction L-valine(in) + Na(+)(in) = L-valine(out) + Na(+)(out). Functionally, transporter that mediates resorption of neutral amino acids across the apical membrane of renal and intestinal epithelial cells. This uptake is sodium-dependent and chloride-independent. Requires CLTRN in kidney or ACE2 in intestine for cell surface expression and amino acid transporter activity. The protein is Sodium-dependent neutral amino acid transporter B(0)AT1 (Slc6a19) of Mus musculus (Mouse).